Reading from the N-terminus, the 242-residue chain is Sec-independent protein translocase protein TatCd (242 aa).

Helical transmembrane passes span 19–39, 60–80, and 107–127; these read IIVT…FVQD, ILWV…IPVA, and LFAL…PIVL. Residues 128-149 form an interaction with TatAd region; the sequence is SFLTHLSSGHFETMFTADRYFR. Residues 150-170 traverse the membrane as a helical segment; it reads FMVNLSLPFGFLFEMPLVVMF. Residues 171 to 187 form an interaction with TatAd region; the sequence is LTRLGILNPYRLAKARK. 2 helical membrane-spanning segments follow: residues 188 to 208 and 209 to 229; these read LSYF…FISD and FLVM…SAFV.

The protein belongs to the TatC family. In terms of assembly, forms a complex with TatAd. Two types of complexes exist: one composed of TatAd and TatCd, and another composed only of TatAd.

The protein localises to the cell membrane. In terms of biological role, part of the twin-arginine translocation (Tat) system that transports large folded proteins containing a characteristic twin-arginine motif in their signal peptide across membranes. Required for PhoD secretion. TatCd promotes membrane localization of TatAd via domain specific interactions. TatCd is required for stabile production of TatAd as well as for its maintenance. The sequence is that of Sec-independent protein translocase protein TatCd from Bacillus subtilis (strain 168).